We begin with the raw amino-acid sequence, 498 residues long: Alpha-amylase A (498 aa).

Residues 1-21 (MMVAWWSLFLYGLQVAAPALA) form the signal peptide. Cysteines 51 and 59 form a disulfide. Residues Gln56 and Trp104 each contribute to the substrate site. Asn142 provides a ligand contact to Ca(2+). Position 143 (His143) interacts with substrate. Cys171 and Cys185 form a disulfide bridge. Ca(2+)-binding residues include Glu183 and Asp196. An N-linked (GlcNAc...) asparagine glycan is attached at Asn218. Arg225 serves as a coordination point for substrate. Positions 227, 231, and 251 each coordinate Ca(2+). Catalysis depends on Asp227, which acts as the Nucleophile. 230–231 (KH) contacts substrate. Glu251 serves as the catalytic Proton donor. Gly255 serves as a coordination point for substrate. A disulfide bridge links Cys261 with Cys304. Substrate contacts are provided by Asp318 and Arg365. Cys461 and Cys496 are disulfide-bonded.

It belongs to the glycosyl hydrolase 13 family. Ca(2+) serves as cofactor.

The enzyme catalyses Endohydrolysis of (1-&gt;4)-alpha-D-glucosidic linkages in polysaccharides containing three or more (1-&gt;4)-alpha-linked D-glucose units.. The chain is Alpha-amylase A (amyA) from Aspergillus awamori (Black koji mold).